The chain runs to 183 residues: Ubiquitin carboxyl-terminal hydrolase 17-like protein 23 (183 aa).

A USP domain is found at 80-183; it reads AGLQNMGNTC…KACLPGHKQV (104 aa).

It belongs to the peptidase C19 family. USP17 subfamily.

The protein resides in the nucleus. It localises to the endoplasmic reticulum. This chain is Ubiquitin carboxyl-terminal hydrolase 17-like protein 23 (USP17L23), found in Homo sapiens (Human).